Consider the following 118-residue polypeptide: Large ribosomal subunit protein bL19 (118 aa).

It belongs to the bacterial ribosomal protein bL19 family.

In terms of biological role, this protein is located at the 30S-50S ribosomal subunit interface and may play a role in the structure and function of the aminoacyl-tRNA binding site. The protein is Large ribosomal subunit protein bL19 of Hahella chejuensis (strain KCTC 2396).